The primary structure comprises 80 residues: Sulfur carrier protein TusA (80 aa).

Catalysis depends on C17, which acts as the Cysteine persulfide intermediate.

The protein belongs to the sulfur carrier protein TusA family.

The protein localises to the cytoplasm. Sulfur carrier protein which probably makes part of a sulfur-relay system. The sequence is that of Sulfur carrier protein TusA from Pseudomonas putida (strain W619).